Consider the following 108-residue polypeptide: uncharacterized protein (108 aa).

This is an uncharacterized protein from Microplitis demolitor bracovirus (isolate Webb) (MdBV).